A 615-amino-acid polypeptide reads, in one-letter code: MAQASGMDPLVDIEDERPKWDNKLQYLLSCIGFAVGLGNIWRFPYLCQTHGGGAFLIPYFIALVFEGIPLFYIELAIGQRLRRGSIGVWKTISPYLGGVGLGCFSVSFLVSLYYNTVLLWVLWFFLNSFQHPLPWSTCPLDLNRTGFVQECQSSGTVSYFWYRQTLNITSDISNTGTIQWKLFLCLVACWSTVYLCVIRGIESTGKVIYFTALFPYLVLTIFLIRGLTLPGATEGLIYLFTPNMKTLQNPRVWLDAATQIFFSLSLAFGGHIAFASYNPPRNNCEKDAVIIALVNSMTSLYASIAIFSVMGFKASNDYGRCLDRNILSLINEFDLPELSISRDEYPSVLMYLNATQTARVAQLPLKTCHLEDFLDKSASGPGLAFIVFTEAVLHMPGASVWSVLFFGMLFTLGLSSMFGNMEGVITPLLDMGILPKGIPKEVMTGVICFACFLSAICFTLQSGGYWLEIFDSFAASLNLIIFAFMEVVGVIHIYGMKRFCDDIEWMTGRRPGLYWQVTWRVVSPMLLFGIFLSYIVLLIQTPPSYKAWNPQYEHFPSREEKFYPGWVQVTCVLLSFLPSLWVPGVALAQLLSQYKQRWKATHLESGLKLQESRGC.

Over 1–26 (MAQASGMDPLVDIEDERPKWDNKLQY) the chain is Cytoplasmic. The helical transmembrane segment at 27 to 47 (LLSCIGFAVGLGNIWRFPYLC) threads the bilayer. At 48–52 (QTHGG) the chain is on the extracellular side. The chain crosses the membrane as a helical span at residues 53–73 (GAFLIPYFIALVFEGIPLFYI). Residues 74–105 (ELAIGQRLRRGSIGVWKTISPYLGGVGLGCFS) are Cytoplasmic-facing. A helical membrane pass occupies residues 106–126 (VSFLVSLYYNTVLLWVLWFFL). At 127–177 (NSFQHPLPWSTCPLDLNRTGFVQECQSSGTVSYFWYRQTLNITSDISNTGT) the chain is on the extracellular side. Residues Asn-143 and Asn-167 are each glycosylated (N-linked (GlcNAc...) asparagine). Residues 178-198 (IQWKLFLCLVACWSTVYLCVI) form a helical membrane-spanning segment. The Cytoplasmic segment spans residues 199–206 (RGIESTGK). The helical transmembrane segment at 207–227 (VIYFTALFPYLVLTIFLIRGL) threads the bilayer. The Extracellular segment spans residues 228–255 (TLPGATEGLIYLFTPNMKTLQNPRVWLD). Residues 256-276 (AATQIFFSLSLAFGGHIAFAS) traverse the membrane as a helical segment. Topologically, residues 277 to 288 (YNPPRNNCEKDA) are cytoplasmic. A helical transmembrane segment spans residues 289 to 309 (VIIALVNSMTSLYASIAIFSV). The Extracellular portion of the chain corresponds to 310-397 (MGFKASNDYG…FTEAVLHMPG (88 aa)). A glycan (N-linked (GlcNAc...) asparagine) is linked at Asn-353. Residues 398 to 418 (ASVWSVLFFGMLFTLGLSSMF) form a helical membrane-spanning segment. Residues 419 to 441 (GNMEGVITPLLDMGILPKGIPKE) lie on the Cytoplasmic side of the membrane. A helical membrane pass occupies residues 442–462 (VMTGVICFACFLSAICFTLQS). Residues 463 to 472 (GGYWLEIFDS) lie on the Extracellular side of the membrane. The helical transmembrane segment at 473–493 (FAASLNLIIFAFMEVVGVIHI) threads the bilayer. The Cytoplasmic segment spans residues 494-520 (YGMKRFCDDIEWMTGRRPGLYWQVTWR). A helical membrane pass occupies residues 521–541 (VVSPMLLFGIFLSYIVLLIQT). Residues 542-570 (PPSYKAWNPQYEHFPSREEKFYPGWVQVT) lie on the Extracellular side of the membrane. Residues 571–591 (CVLLSFLPSLWVPGVALAQLL) traverse the membrane as a helical segment. The Cytoplasmic segment spans residues 592–615 (SQYKQRWKATHLESGLKLQESRGC).

Belongs to the sodium:neurotransmitter symporter (SNF) (TC 2.A.22) family. SLC6A18 subfamily. As to quaternary structure, interacts with CLTRN; this interaction regulates the trafficking of SLC6A18 to the cell membrane and its activity. Expressed predominantly in kidney.

The protein resides in the apical cell membrane. Its subcellular location is the cell membrane. The enzyme catalyses L-alanine(out) + chloride(out) + 2 Na(+)(out) = L-alanine(in) + chloride(in) + 2 Na(+)(in). The catalysed reaction is glycine(out) + chloride(out) + 2 Na(+)(out) = glycine(in) + chloride(in) + 2 Na(+)(in). It catalyses the reaction L-methionine(out) + chloride(out) + 2 Na(+)(out) = L-methionine(in) + chloride(in) + 2 Na(+)(in). It carries out the reaction L-valine(out) + chloride(out) + 2 Na(+)(out) = L-valine(in) + chloride(in) + 2 Na(+)(in). The enzyme catalyses L-isoleucine(out) + chloride(out) + 2 Na(+)(out) = L-isoleucine(in) + chloride(in) + 2 Na(+)(in). The catalysed reaction is L-serine(out) + chloride(out) + 2 Na(+)(out) = L-serine(in) + chloride(in) + 2 Na(+)(in). It catalyses the reaction L-leucine(out) + chloride(out) + 2 Na(+)(out) = L-leucine(in) + chloride(in) + 2 Na(+)(in). Symporter that transports one amino acid molecule together with two sodium and one chloride ions in kidneys and plays a role in the neutral amino acids reabsorption. Preferentially transports neutral amino acids such as L-glycine and L-alanine but also other neutral amino acids. Required CLTRN for cell surface expression and for its amino acid transporter activity. The transport mechanism is pH-independent. This chain is Sodium-dependent neutral amino acid transporter B(0)AT3, found in Mus musculus (Mouse).